The sequence spans 141 residues: Putative pre-16S rRNA nuclease (141 aa).

The protein belongs to the YqgF nuclease family.

The protein resides in the cytoplasm. Could be a nuclease involved in processing of the 5'-end of pre-16S rRNA. The protein is Putative pre-16S rRNA nuclease of Cupriavidus necator (strain ATCC 17699 / DSM 428 / KCTC 22496 / NCIMB 10442 / H16 / Stanier 337) (Ralstonia eutropha).